The chain runs to 49 residues: MRQNIILECVETGERLYLTSKNKRNNPERIELKKYSPKLRRRAIFKEVK.

It belongs to the bacterial ribosomal protein bL33 family.

This chain is Large ribosomal subunit protein bL33A (rpmG1), found in Enterococcus faecalis (strain ATCC 700802 / V583).